The following is a 595-amino-acid chain: Actin-histidine N-methyltransferase (595 aa).

Residues M1–P22 form a disordered region. Residues Q10–V20 show a composition bias toward polar residues. Residues R75, E104–F106, R254, D275–H279, and S325–F327 contribute to the S-adenosyl-L-methionine site. The SET domain maps to E94–G314. S513 is subject to Phosphoserine. Residues L552–K595 are disordered. The segment covering E573–K583 has biased composition (basic and acidic residues). A compositionally biased stretch (polar residues) spans G584–K595.

This sequence belongs to the class V-like SAM-binding methyltransferase superfamily. SETD3 actin-histidine methyltransferase family. In terms of assembly, interacts with MYOD1. Phosphorylated by GSK3B, which is required for recognition by the SCF(FBXW7) complex and subsequent degradation. In terms of processing, ubiquitinated by the SCF(FBXW7) complex following phosphorylation by GSK3B, leading to its degradation by the proteasome.

The protein localises to the cytoplasm. It localises to the nucleus. It carries out the reaction L-histidyl-[protein] + S-adenosyl-L-methionine = N(tele)-methyl-L-histidyl-[protein] + S-adenosyl-L-homocysteine + H(+). Its function is as follows. Protein-histidine N-methyltransferase that specifically mediates 3-methylhistidine (tele-methylhistidine) methylation of actin at 'His-73'. Histidine methylation of actin is required for smooth muscle contraction of the laboring uterus during delivery. Does not have protein-lysine N-methyltransferase activity and probably only catalyzes histidine methylation of actin. The polypeptide is Actin-histidine N-methyltransferase (Otolemur garnettii (Small-eared galago)).